The following is a 433-amino-acid chain: Myricetin 3-O-glucosyl 1,2-rhamnoside 6'-O-caffeoyltransferase AT2 (433 aa).

Catalysis depends on proton acceptor residues histidine 157 and aspartate 375.

Belongs to the plant acyltransferase family. In terms of tissue distribution, expressed in young cromes.

The catalysed reaction is myricetin 3-O-[beta-D-glucosyl-(1-&gt;2)-alpha-L-rhamnoside] + (E)-caffeoyl-CoA = myricetin 3-O-[(6-O-(E)-caffeoyl-beta-D-glucosyl)-(1-&gt;2)-alpha-L-rhamnoside] + CoA. Its pathway is flavonoid metabolism. Its function is as follows. Caffeoyltransferase involved in montbretin A (MbA) biosynthesis. Catalyzes the caffeoylation of myricetin 3-O-beta-D-glucosyl 1,2-alpha-L-rhamnoside (MRG) to produce myricetin 3-O-(6'-O-caffeoyl)-beta-D-glucosyl 1,2-alpha-L-rhamnoside (mini-MbA), a precursor of MbA. Mini-MbA and MbA are potent inhibitors of human pancreatic alpha-amylase and are being developed as drug candidates to treat type-2 diabetes. In vitro, is able to catalyze the caffeoylation of quercetin 3-O-sophoroside (QGG), although QGG may not be a physiological substrate in vivo. In vitro, can use coumaryl-CoA, feruloyl-CoA and acetyl-CoA, although these three acyl donors may not be physiological in vivo. The protein is Myricetin 3-O-glucosyl 1,2-rhamnoside 6'-O-caffeoyltransferase AT2 of Crocosmia x crocosmiiflora (Montbretia).